Here is a 158-residue protein sequence, read N- to C-terminus: MRLLPLASVTLLSVLCAQAFAAKLEDTAPYPKAEDGFTRQVIHLPKQQHEDRYKVEILAGKTLTVDCNLQRLGGKLLEKNLEGWGYPYYRLDQVSGPISTRMACPDGKTREDFVPVTGDGFVLRYNSKLPIVIYAPKDVEVRYRLWSAADKTENARQE.

An N-terminal signal peptide occupies residues 1–21; that stretch reads MRLLPLASVTLLSVLCAQAFA. An intrachain disulfide couples Cys-67 to Cys-104.

The protein belongs to the protease inhibitor I11 (ecotin) family. As to quaternary structure, homodimer.

It localises to the periplasm. Functionally, general inhibitor of family S1 serine proteases. The protein is Ecotin of Pseudomonas fluorescens (strain ATCC BAA-477 / NRRL B-23932 / Pf-5).